A 931-amino-acid polypeptide reads, in one-letter code: Neuropilin-2 (931 aa).

A signal peptide (or 22) is located at residues 1 to 20; sequence MDMFPLTWVFLALYFSRHQV. Residues 21–864 are Extracellular-facing; the sequence is RGQPDPPCGG…EKSWLYTLDP (844 aa). 3 disulfide bridges follow: C28/C55, C83/C105, and C149/C175. 2 CUB domains span residues 28–142 and 149–267; these read CGGR…YEIF and CSKN…YYLV. 2 N-linked (GlcNAc...) asparagine glycosylation sites follow: N152 and N157. Ca(2+) contacts are provided by E197, D211, and D252. Cysteines 208 and 230 form a disulfide. Disulfide bonds link C277-C427 and C434-C592. 2 F5/8 type C domains span residues 277–427 and 434–592; these read CNVP…LFGC and CSNM…VLGC. The span at 298 to 310 shows a compositional bias: polar residues; it reads TYSDGRWTPQQSR. A disordered region spans residues 298 to 317; that stretch reads TYSDGRWTPQQSRLHGDDNG. The interval 601–622 is disordered; the sequence is VETLGPTVKSEETTTPYPTEEE. N-linked (GlcNAc...) asparagine glycosylation is present at N629. Residues 642 to 802 form the MAM domain; it reads SGFNCNFDFL…TDVPLENCME (161 aa). N839 carries N-linked (GlcNAc...) asparagine glycosylation. The helical transmembrane segment at 865–889 threads the bilayer; it reads ILITIIAMSSLGVLLGATCAGLLLY. Residues 890 to 931 lie on the Cytoplasmic side of the membrane; that stretch reads CTCSYSGLSSRSCTTLENYNFELYDGLKHKVKMNHQKCCSEA.

This sequence belongs to the neuropilin family. Heterodimer with NRP1. Binds PLXNB1. In terms of assembly, (Microbial infection) Interacts with human cytomegalovirus proteins gL, UL128, UL130 and UL131A.

The protein localises to the membrane. The protein resides in the secreted. Its function is as follows. High affinity receptor for semaphorins 3C, 3F, VEGF-165 and VEGF-145 isoforms of VEGF, and the PLGF-2 isoform of PGF. In terms of biological role, (Microbial infection) Acts as a receptor for human cytomegalovirus pentamer-dependent entry in epithelial and endothelial cells. The sequence is that of Neuropilin-2 (NRP2) from Homo sapiens (Human).